The primary structure comprises 446 residues: Endoplasmic reticulum membrane adapter protein XK (446 aa).

The Cytoplasmic portion of the chain corresponds to 1 to 2; that stretch reads MK. Residues 3–23 form a helical membrane-spanning segment; sequence FPASVIASVFLFVAETAAALY. Topologically, residues 24 to 37 are extracellular; it reads LSSTYRSAGDRMWQ. A helical membrane pass occupies residues 38–58; that stretch reads VLTLLFSLMPCALVQFTLLFV. Residues 59 to 68 lie on the Cytoplasmic side of the membrane; it reads HRDLSRDRPL. Residues 69-89 form a helical membrane-spanning segment; the sequence is ALLMHLLQLGPLYRCCEVFCI. The Extracellular segment spans residues 90–140; sequence YCQSDQNEEPYVSITKKRQMPKDGLSEEVEKEVGQAEGKLITHRSAFSRAS. Serine 115 is modified (phosphoserine). Residues 141–161 traverse the membrane as a helical segment; it reads VIQAFLGSAPQLTLQLYITVL. Over 162–171 the chain is Cytoplasmic; that stretch reads EQNITTGRCF. The chain crosses the membrane as a helical span at residues 172–192; sequence IMTLSLLSIVYGALRCNILAI. At 193–208 the chain is on the extracellular side; the sequence is KIKYDEYEVKVKPLAY. Residues 209 to 229 form a helical membrane-spanning segment; sequence VCIFLWRSFEIATRVIVLVLF. The Cytoplasmic portion of the chain corresponds to 230 to 235; the sequence is TSVLKI. A helical membrane pass occupies residues 236-256; the sequence is WVVAVILVNFFSFFLYPWIVF. The Extracellular portion of the chain corresponds to 257 to 277; it reads WCSGSPFPENIEKALSRVGTT. A helical membrane pass occupies residues 278 to 298; that stretch reads IVLCFLTLLYAGINMFCWSAV. Over 299–317 the chain is Cytoplasmic; that stretch reads QLKIDNPELISKSQNWYRL. A helical transmembrane segment spans residues 318–338; the sequence is LIYYMTRFIENSVLLLLWYFF. Topologically, residues 339–349 are extracellular; that stretch reads KTDIYMYVCAP. Residues 350–370 form a helical membrane-spanning segment; that stretch reads LLILQLLIGYCTGILFMLVFY. The Cytoplasmic segment spans residues 371–446; it reads QFFHPCKKLF…IWTAVDLCSA (76 aa).

It belongs to the XK family. Heterodimer with Kell; disulfide-linked. Interacts with VPS13A.

It localises to the endoplasmic reticulum membrane. Its function is as follows. Recruits the lipid transfer protein VPS13A from lipid droplets to the endoplasmic reticulum (ER) membrane. The protein is Endoplasmic reticulum membrane adapter protein XK of Mus musculus (Mouse).